A 359-amino-acid polypeptide reads, in one-letter code: 3-dehydroquinate synthase (359 aa).

NAD(+) contacts are provided by residues 72–77 (DGEHYK), 106–110 (GVIGD), 130–131 (TT), Lys143, and Lys152. Residues Glu185, His248, and His265 each contribute to the Zn(2+) site.

Belongs to the sugar phosphate cyclases superfamily. Dehydroquinate synthase family. Requires Co(2+) as cofactor. The cofactor is Zn(2+). NAD(+) is required as a cofactor.

The protein localises to the cytoplasm. It carries out the reaction 7-phospho-2-dehydro-3-deoxy-D-arabino-heptonate = 3-dehydroquinate + phosphate. It functions in the pathway metabolic intermediate biosynthesis; chorismate biosynthesis; chorismate from D-erythrose 4-phosphate and phosphoenolpyruvate: step 2/7. Catalyzes the conversion of 3-deoxy-D-arabino-heptulosonate 7-phosphate (DAHP) to dehydroquinate (DHQ). This Thermodesulfovibrio yellowstonii (strain ATCC 51303 / DSM 11347 / YP87) protein is 3-dehydroquinate synthase.